The chain runs to 153 residues: Ribosome maturation factor RimP (153 aa).

It belongs to the RimP family.

The protein resides in the cytoplasm. Required for maturation of 30S ribosomal subunits. The sequence is that of Ribosome maturation factor RimP from Clostridium botulinum (strain Okra / Type B1).